The primary structure comprises 332 residues: F-box/SPRY domain-containing protein 1 (332 aa).

Over residues 1-10 (MTENNEETIV) the composition is skewed to acidic residues. Residues 1 to 81 (MTENNEETIV…RRSPRRPEVS (81 aa)) are disordered. A compositionally biased stretch (polar residues) spans 15–24 (CNLTSSTPMK). An F-box domain is found at 79–127 (EVSASRLPLKVLNQIFQYLSLKDLRSAMLTCHSWNNALSMEDSDIWQQL). In terms of domain architecture, B30.2/SPRY spans 138–330 (SDPFLFVELR…VTMVYVGSPQ (193 aa)).

The protein belongs to the FBXO45/Fsn family. In terms of assembly, component of an SCF (SKP1-CUL1-F-box protein) E3 ubiquitin ligase complex composed of cul-1, fsn-1, rpm-1 and skr-1. Interacts (via SPRY domain) with scd-2 (via cytoplasmic domain). Interacts (via SPRY domain) with convertase egl-3 (via C-terminus).

It localises to the synapse. Its pathway is protein modification; protein ubiquitination. Its function is as follows. Component of a SCF (SKP1-CUL1-F-box protein) E3 ubiquitin ligase complex which is required for the restriction and/or maturation of synapses in GABAergic neuromuscular junction (NMJ) presynaptic neurons. Promotes NRJ synapse development and synaptic transmission by negatively regulating the daf-2/InsR pathway in muscles. By targeting convertase egl-3 for degradation, negatively modulates insulin-like protein ins-4 and ins-6 processing. May stabilize synapse formation by promoting the down-regulation of scd-2. Regulates axon termination in PLM and ALM neurons. In Caenorhabditis briggsae, this protein is F-box/SPRY domain-containing protein 1 (fsn-1).